A 370-amino-acid chain; its full sequence is Proto-oncogene Wnt-1 (370 aa).

A signal peptide spans 1 to 27 (MGLWALLPGWVSATLLLALAALPAALA). Residue asparagine 29 is glycosylated (N-linked (GlcNAc...) asparagine). Cystine bridges form between cysteine 93/cysteine 104, cysteine 143/cysteine 151, cysteine 153/cysteine 170, cysteine 218/cysteine 232, cysteine 220/cysteine 227, cysteine 299/cysteine 330, cysteine 315/cysteine 325, cysteine 329/cysteine 369, cysteine 345/cysteine 360, cysteine 347/cysteine 357, and cysteine 352/cysteine 353. Serine 224 carries the O-palmitoleoyl serine; by PORCN lipid modification. 2 N-linked (GlcNAc...) asparagine glycosylation sites follow: asparagine 316 and asparagine 346. Residue asparagine 359 is glycosylated (N-linked (GlcNAc...) asparagine).

This sequence belongs to the Wnt family. Forms a soluble 1:1 complex with AFM; this prevents oligomerization and is required for prolonged biological activity. The complex with AFM may represent the physiological form in body fluids. Interacts with PORCN. Interacts with RSPO1, RSPO2 and RSPO3. Interacts with WLS. In terms of processing, palmitoleoylation is required for efficient binding to frizzled receptors. Palmitoleoylation is necessary for proper trafficking to cell surface. Depalmitoleoylated by NOTUM, leading to inhibit Wnt signaling pathway.

Its subcellular location is the secreted. The protein resides in the extracellular space. It localises to the extracellular matrix. Its function is as follows. Ligand for members of the frizzled family of seven transmembrane receptors. Acts in the canonical Wnt signaling pathway by promoting beta-catenin-dependent transcriptional activation. In some developmental processes, is also a ligand for the coreceptor RYK, thus triggering Wnt signaling. Plays an essential role in the development of the embryonic brain and central nervous system (CNS). Has a role in osteoblast function, bone development and bone homeostasis. This chain is Proto-oncogene Wnt-1 (WNT1), found in Homo sapiens (Human).